A 268-amino-acid polypeptide reads, in one-letter code: Small ribosomal subunit protein mS43 (268 aa).

Residues 1-23 (MLNTGLRKGLALSPITHLLKRCS) constitute a mitochondrion transit peptide.

It belongs to the mitochondrion-specific ribosomal protein mS43 family. In terms of assembly, component of the mitochondrial small ribosomal subunit (mt-SSU). Mature yeast 74S mitochondrial ribosomes consist of a small (37S) and a large (54S) subunit. The 37S small subunit contains a 15S ribosomal RNA (15S mt-rRNA) and at least 32 different proteins. The 54S large subunit contains a 21S rRNA (21S mt-rRNA) and at least 45 different proteins. mS43 forms a dimer with mS42, building a large protuberance adjacent to the mRNA channel exit in the mt-SSU body.

It localises to the mitochondrion. Its function is as follows. Component of the mitochondrial ribosome (mitoribosome), a dedicated translation machinery responsible for the synthesis of mitochondrial genome-encoded proteins, including at least some of the essential transmembrane subunits of the mitochondrial respiratory chain. The mitoribosomes are attached to the mitochondrial inner membrane and translation products are cotranslationally integrated into the membrane. This is Small ribosomal subunit protein mS43 from Schizosaccharomyces pombe (strain 972 / ATCC 24843) (Fission yeast).